We begin with the raw amino-acid sequence, 877 residues long: Phosphoenolpyruvate carboxylase (877 aa).

Active-site residues include His-138 and Lys-544.

Belongs to the PEPCase type 1 family. It depends on Mg(2+) as a cofactor.

The enzyme catalyses oxaloacetate + phosphate = phosphoenolpyruvate + hydrogencarbonate. Forms oxaloacetate, a four-carbon dicarboxylic acid source for the tricarboxylic acid cycle. The polypeptide is Phosphoenolpyruvate carboxylase (Vibrio vulnificus (strain YJ016)).